The primary structure comprises 482 residues: ATP synthase subunit beta (482 aa).

161–168 (GGAGVGKT) lines the ATP pocket.

It belongs to the ATPase alpha/beta chains family. In terms of assembly, F-type ATPases have 2 components, CF(1) - the catalytic core - and CF(0) - the membrane proton channel. CF(1) has five subunits: alpha(3), beta(3), gamma(1), delta(1), epsilon(1). CF(0) has four main subunits: a(1), b(1), b'(1) and c(9-12).

It localises to the cellular thylakoid membrane. It catalyses the reaction ATP + H2O + 4 H(+)(in) = ADP + phosphate + 5 H(+)(out). In terms of biological role, produces ATP from ADP in the presence of a proton gradient across the membrane. The catalytic sites are hosted primarily by the beta subunits. The polypeptide is ATP synthase subunit beta (Gloeothece citriformis (strain PCC 7424) (Cyanothece sp. (strain PCC 7424))).